The sequence spans 215 residues: Chaperone protein TorD (215 aa).

Belongs to the TorD/DmsD family. TorD subfamily.

The protein resides in the cytoplasm. In terms of biological role, involved in the biogenesis of TorA. Acts on TorA before the insertion of the molybdenum cofactor and, as a result, probably favors a conformation of the apoenzyme that is competent for acquiring the cofactor. The polypeptide is Chaperone protein TorD (Aliivibrio fischeri (strain ATCC 700601 / ES114) (Vibrio fischeri)).